Reading from the N-terminus, the 405-residue chain is Acetylornithine aminotransferase 2 (405 aa).

Pyridoxal 5'-phosphate-binding positions include 105 to 106 (GT) and Phe138. Position 141 (Arg141) interacts with N(2)-acetyl-L-ornithine. Position 224–227 (224–227 (DEVQ)) interacts with pyridoxal 5'-phosphate. At Lys254 the chain carries N6-(pyridoxal phosphate)lysine. N(2)-acetyl-L-ornithine is bound at residue Ser282. Thr283 provides a ligand contact to pyridoxal 5'-phosphate.

This sequence belongs to the class-III pyridoxal-phosphate-dependent aminotransferase family. ArgD subfamily. As to quaternary structure, homodimer. The cofactor is pyridoxal 5'-phosphate.

It localises to the cytoplasm. It catalyses the reaction N(2)-acetyl-L-ornithine + 2-oxoglutarate = N-acetyl-L-glutamate 5-semialdehyde + L-glutamate. It participates in amino-acid biosynthesis; L-arginine biosynthesis; N(2)-acetyl-L-ornithine from L-glutamate: step 4/4. This is Acetylornithine aminotransferase 2 from Caulobacter vibrioides (strain ATCC 19089 / CIP 103742 / CB 15) (Caulobacter crescentus).